Reading from the N-terminus, the 154-residue chain is Transcriptional repressor NrdR (154 aa).

A zinc finger spans residues 3-34 (CPHCHKNGSRVVDSRPSEDGSFIRRRRECIHC). Residues 49–139 (LLVIKKDGTR…VYRQFKDVDA (91 aa)) enclose the ATP-cone domain.

The protein belongs to the NrdR family. Zn(2+) is required as a cofactor.

Functionally, negatively regulates transcription of bacterial ribonucleotide reductase nrd genes and operons by binding to NrdR-boxes. This Limosilactobacillus reuteri (strain DSM 20016) (Lactobacillus reuteri) protein is Transcriptional repressor NrdR.